A 469-amino-acid polypeptide reads, in one-letter code: MFPFFFALFFSSTDVLAASPSYNGLGLTPQMGWDNWNSFGCSVKEELLLGTAEKIVKLGLKDLGYNYIILDDCWSSGRSSNGSLLADDSKFPHGMKYVAEQLHNSQLKFGMYSSAGEYTCAGYAGSLGYEDMDAATFASWDVDYLKYDNCYNKGEFGTPEISYKRYKAMSDALNKTGRPIFYSLCNWGQDLTFYWGSAISNSWRMSGDVYPQFDRPDSRCPCSGDEYDCSYPGFHCSIMNILNKAAPMGQNAAPGGWNDLDMLEVGVGNMSDSEEVAHFSMWAIVKSPLIIGADIDDLKDSSLSVYSNPAVIAINQDVLGTPATRIWKYHVSDKDQYGEGEIQLWSGPLDNGDHVVALLNGGNNERSMNASWNDIFIDYLADSDELSNTWGLYDLWARRMSNATAASILSGNMTSAGLNYNVTQLNYTAGIARNDSRLFGDRVVELSKGESLTATVPGHGVALFRLRPE.

An N-terminal signal peptide occupies residues 1-17; the sequence is MFPFFFALFFSSTDVLA. The cysteines at positions 41 and 73 are disulfide-linked. Substrate is bound by residues aspartate 71 and aspartate 72. Asparagine 81 is a glycosylation site (N-linked (GlcNAc...) asparagine). Cysteine 120 and cysteine 150 are oxidised to a cystine. Substrate is bound at residue lysine 146. Aspartate 148 functions as the Nucleophile in the catalytic mechanism. N-linked (GlcNAc...) asparagine glycosylation is present at asparagine 174. Arginine 204 lines the substrate pocket. Residue aspartate 208 is the Proton donor of the active site. 2 disulfides stabilise this stretch: cysteine 220-cysteine 236 and cysteine 222-cysteine 229. Glutamine 250 is a substrate binding site. N-linked (GlcNAc...) asparagine glycosylation is found at asparagine 269, asparagine 369, asparagine 402, asparagine 412, asparagine 421, asparagine 426, and asparagine 434.

The protein belongs to the glycosyl hydrolase 27 family. In terms of assembly, homotetramer.

The protein localises to the secreted. The catalysed reaction is Hydrolysis of terminal, non-reducing alpha-D-galactose residues in alpha-D-galactosides, including galactose oligosaccharides, galactomannans and galactolipids.. The protein is Alpha-galactosidase (MEL) of Lachancea cidri (Yeast).